A 410-amino-acid chain; its full sequence is MYGHLSLSTLSLLAVVAAAPFPESWLQPRDSDVSQLFRRGAPDPKASDYLSYYPSPGSTPNVSTIPQAWLDKLATVQLPNVSVATANDGRPTYPNNENDGDSEICSFTDQCYVEDDLYSPPGEKVWALSFDDGPTDVSPALYDYLAQNNISSSATHFMIGGNIITSPQSVLIAIEAGGHLAVHTWSHPYMTTLTNEQVVAELGWTMQALSDLNGGRIPMYWRPPYGDVDNRVRAIAKGVFGLVTVLWDSDTNDWAISDQPDQYSVASVEAYFDTLVTGNRTQGLLLLEHELDNNTVEVFETEYPKAVANGWSVKNVADAFSMKWYLNSGKGNDDVVTTMSVAGTLTTAKPTHTSTSVASATATSSASVTDSAGVSIASAASSQESSSWPIANRPSLFVIACGLALAAIMV.

A signal peptide spans 1–18; the sequence is MYGHLSLSTLSLLAVVAA. The propeptide occupies 19-39; that stretch reads APFPESWLQPRDSDVSQLFRR. Residues Asn61 and Asn80 are each glycosylated (N-linked (GlcNAc...) asparagine). The NodB homology domain maps to 124–314; that stretch reads KVWALSFDDG…KAVANGWSVK (191 aa). Asp131 (proton acceptor) is an active-site residue. Asp131 is a binding site for acetate. Asp132 contacts Co(2+). N-linked (GlcNAc...) asparagine glycosylation is present at Asn149. Residues His183 and His187 each coordinate Co(2+). Tyr225 lines the acetate pocket. A glycan (N-linked (GlcNAc...) asparagine) is linked at Asn279. The Proton donor role is filled by His289. N-linked (GlcNAc...) asparagine glycosylation occurs at Asn293. Ser385 is lipidated: GPI-anchor amidated serine. The propeptide at 386-410 is removed in mature form; sequence SSWPIANRPSLFVIACGLALAAIMV.

Belongs to the polysaccharide deacetylase family. The cofactor is Co(2+).

It localises to the cell membrane. It catalyses the reaction [(1-&gt;4)-N-acetyl-beta-D-glucosaminyl](n) + n H2O = chitosan + n acetate. Functionally, hydrolyzes the N-acetamido groups of N-acetyl-D-glucosamine residues in chitin to form chitosan and acetate. Chitosan is required to anchor melanin to the cell wall, for maintenance of cell wall integrity, and for proper cytokinesis. Chitosan offers an advantage during infection as it is less readily detected than chitin by host immunosurveillance mechanisms. The protein is Chitin deacetylase 3 of Cryptococcus neoformans var. neoformans serotype D (strain JEC21 / ATCC MYA-565) (Filobasidiella neoformans).